Reading from the N-terminus, the 445-residue chain is Probable glycine dehydrogenase (decarboxylating) subunit 1 (445 aa).

The protein belongs to the GcvP family. N-terminal subunit subfamily. In terms of assembly, the glycine cleavage system is composed of four proteins: P, T, L and H. In this organism, the P 'protein' is a heterodimer of two subunits.

It catalyses the reaction N(6)-[(R)-lipoyl]-L-lysyl-[glycine-cleavage complex H protein] + glycine + H(+) = N(6)-[(R)-S(8)-aminomethyldihydrolipoyl]-L-lysyl-[glycine-cleavage complex H protein] + CO2. Its function is as follows. The glycine cleavage system catalyzes the degradation of glycine. The P protein binds the alpha-amino group of glycine through its pyridoxal phosphate cofactor; CO(2) is released and the remaining methylamine moiety is then transferred to the lipoamide cofactor of the H protein. The chain is Probable glycine dehydrogenase (decarboxylating) subunit 1 from Citrifermentans bemidjiense (strain ATCC BAA-1014 / DSM 16622 / JCM 12645 / Bem) (Geobacter bemidjiensis).